The following is a 168-amino-acid chain: Oleosin 18.2 kDa (168 aa).

Residue Ala-2 is modified to N-acetylalanine. The polar stretch occupies residues 2–45 (AEVRDRNLPHQVQVHPQYRLDNTTGGGYGAKNYHSGPSTSQVLA). Transmembrane regions (helical) follow at residues 43 to 63 (VLAV…AGLT), 76 to 96 (PLFI…AMAV), and 97 to 117 (TGFL…SYVL). The segment at 46 to 117 (VLTLLPIGGT…TGLSSLSYVL (72 aa)) is hydrophobic.

Belongs to the oleosin family.

Its subcellular location is the lipid droplet. It is found in the membrane. Functionally, may have a structural role to stabilize the lipid body during desiccation of the seed by preventing coalescence of the oil. Probably interacts with both lipid and phospholipid moieties of lipid bodies. May also provide recognition signals for specific lipase anchorage in lipolysis during seedling growth. The protein is Oleosin 18.2 kDa (MATP6-A) of Gossypium hirsutum (Upland cotton).